Here is a 415-residue protein sequence, read N- to C-terminus: Adipocyte plasma membrane-associated protein (415 aa).

Residues 1–39 (MNEPEGLRFRRLNRPHIITDETHEPQYKATSTYSGKVFR) are Cytoplasmic-facing. Residues 40 to 60 (VTLLTMVAFLLLPLLVVVFVL) traverse the membrane as a helical segment. Residues 61–412 (ESPIQPEVFS…RSPYLCKLDL (352 aa)) lie on the Extracellular side of the membrane. The N-linked (GlcNAc...) asparagine glycan is linked to Asn-159.

The protein belongs to the strictosidine synthase family.

It is found in the membrane. In Danio rerio (Zebrafish), this protein is Adipocyte plasma membrane-associated protein (apmap).